Consider the following 266-residue polypeptide: uncharacterized protein (266 aa).

A run of 7 helical transmembrane segments spans residues 25–45 (LPSLLVLGFLGGAFIALGYLL), 64–84 (IGAAVFPVGLILVVLAGAELI), 111–131 (IVTIMNLIGALFVAYFFGHLV), 158–178 (VLISAIGCNWLVCLAVWLSFG), 186–206 (ILGIWFPIMAFVAIGFQHVVA), 209–229 (FVIPAAIFAGSFTWGQFIGNI), and 230–250 (IPAFIGNVIGGAVFVGLIYFI).

The protein belongs to the FNT transporter (TC 1.A.16) family.

It is found in the cell membrane. This is an uncharacterized protein from Bacillus subtilis (strain 168).